A 105-amino-acid polypeptide reads, in one-letter code: Antithrombin-III (105 aa).

The N-terminal stretch at 1–17 (MHLFIGVSLRPLGHGIP) is a signal peptide. The segment at 38-105 (ICIYRNPEKK…MRRTSSCRPS (68 aa)) is disordered. Residues 43–53 (NPEKKPQERRG) show a composition bias toward basic and acidic residues.

This sequence belongs to the serpin family. As to quaternary structure, forms protease inhibiting heterodimer with TMPRSS7. In terms of tissue distribution, plasma.

It is found in the secreted. The protein localises to the extracellular space. Functionally, most important serine protease inhibitor in plasma that regulates the blood coagulation cascade. AT-III inhibits thrombin, matriptase-3/TMPRSS7, as well as factors IXa, Xa and XIa. Its inhibitory activity is greatly enhanced in the presence of heparin. The protein is Antithrombin-III (SERPINC1) of Gallus gallus (Chicken).